Reading from the N-terminus, the 239-residue chain is Phosphoribosylaminoimidazole-succinocarboxamide synthase (239 aa).

Belongs to the SAICAR synthetase family.

The catalysed reaction is 5-amino-1-(5-phospho-D-ribosyl)imidazole-4-carboxylate + L-aspartate + ATP = (2S)-2-[5-amino-1-(5-phospho-beta-D-ribosyl)imidazole-4-carboxamido]succinate + ADP + phosphate + 2 H(+). Its pathway is purine metabolism; IMP biosynthesis via de novo pathway; 5-amino-1-(5-phospho-D-ribosyl)imidazole-4-carboxamide from 5-amino-1-(5-phospho-D-ribosyl)imidazole-4-carboxylate: step 1/2. The protein is Phosphoribosylaminoimidazole-succinocarboxamide synthase of Bacillus cytotoxicus (strain DSM 22905 / CIP 110041 / 391-98 / NVH 391-98).